A 489-amino-acid chain; its full sequence is Ribulose bisphosphate carboxylase large chain (489 aa).

The substrate site is built by asparagine 128 and threonine 178. Lysine 180 acts as the Proton acceptor in catalysis. Lysine 182 is a substrate binding site. Lysine 206, aspartate 208, and glutamate 209 together coordinate Mg(2+). Lysine 206 is modified (N6-carboxylysine). The active-site Proton acceptor is histidine 298. Arginine 299, histidine 331, and serine 383 together coordinate substrate.

The protein belongs to the RuBisCO large chain family. Type I subfamily. In terms of assembly, heterohexadecamer of 8 large chains and 8 small chains. The cofactor is Mg(2+).

It carries out the reaction 2 (2R)-3-phosphoglycerate + 2 H(+) = D-ribulose 1,5-bisphosphate + CO2 + H2O. The catalysed reaction is D-ribulose 1,5-bisphosphate + O2 = 2-phosphoglycolate + (2R)-3-phosphoglycerate + 2 H(+). In terms of biological role, ruBisCO catalyzes two reactions: the carboxylation of D-ribulose 1,5-bisphosphate, the primary event in carbon dioxide fixation, as well as the oxidative fragmentation of the pentose substrate. Both reactions occur simultaneously and in competition at the same active site. The polypeptide is Ribulose bisphosphate carboxylase large chain (Nitrosospira multiformis (strain ATCC 25196 / NCIMB 11849 / C 71)).